The sequence spans 144 residues: Putative protein PHLOEM PROTEIN 2-LIKE B4 (144 aa).

The protein is Putative protein PHLOEM PROTEIN 2-LIKE B4 (PP2B4) of Arabidopsis thaliana (Mouse-ear cress).